The sequence spans 148 residues: Small ribosomal subunit protein uS7m (148 aa).

The protein belongs to the universal ribosomal protein uS7 family. As to quaternary structure, part of the small ribosomal subunit.

The protein localises to the mitochondrion. Its function is as follows. One of the primary rRNA binding proteins, it binds directly to 18S rRNA where it nucleates assembly of the head domain of the small subunit. This chain is Small ribosomal subunit protein uS7m (RPS7), found in Arabidopsis thaliana (Mouse-ear cress).